Here is a 242-residue protein sequence, read N- to C-terminus: Anti-Pycsar protein Apyc1 (242 aa).

The segment at 17-216 (FNNNALIEQD…EMQSIIKLMH (200 aa)) is beta-lactamase-like. Positions 59, 61, 63, 64, 142, 162, and 216 each coordinate Zn(2+).

It belongs to the anti-Pycsar protein Apyc1 family. Homodimer. Requires Zn(2+) as cofactor.

The catalysed reaction is 3',5'-cyclic CMP + H2O = CMP + H(+). The enzyme catalyses 3',5'-cyclic UMP + H2O = UMP + H(+). In terms of biological role, counteracts the endogenous Pycsar antiviral defense system. Phosphodiesterase that enables metal-dependent hydrolysis of host cyclic nucleotide Pycsar defense signals such as cCMP and cUMP. This is Anti-Pycsar protein Apyc1 from Saccharibacillus brassicae.